A 398-amino-acid polypeptide reads, in one-letter code: Potassium channel subfamily K member 4 (398 aa).

At 1–3 the chain is on the cytoplasmic side; it reads MRS. The chain crosses the membrane as a helical span at residues 4–24; the sequence is TTLLALLALVLLYLVSGALVF. Residues 25–88 are Extracellular-facing; sequence QALEQPHEQQ…WTNSSNHSSA (64 aa). 2 N-linked (GlcNAc...) asparagine glycosylation sites follow: Asn-81 and Asn-84. The segment at residues 89–103 is an intramembrane region (helical); it reads WNLGSAFFFSGTIIT. The K(+) site is built by Thr-104, Ile-105, Gly-106, and Tyr-107. The segment at 104 to 109 is selectivity filter 1; that stretch reads TIGYGN. The stretch at 104-110 is an intramembrane region; that stretch reads TIGYGNI. Over 111-118 the chain is Extracellular; sequence VLHTDAGR. The helical transmembrane segment at 119 to 151 threads the bilayer; sequence LFCIFYALVGIPLFGMLLAGVGDRLGSSLRRGI. Residues 152-173 lie on the Cytoplasmic side of the membrane; it reads GHIEAIFLKWHVPPGLVRSLSA. A helical membrane pass occupies residues 174–195; the sequence is VLFLLIGCLLFVLTPTFVFSYM. Over 196–200 the chain is Extracellular; it reads ESWSK. The segment at residues 201–214 is an intramembrane region (helical); the sequence is LEAIYFVIVTLTTV. K(+) is bound by residues Thr-213, Val-214, Gly-215, and Phe-216. The tract at residues 213–218 is selectivity filter 2; sequence TVGFGD. An intramembrane segment occupies 215–220; that stretch reads GFGDYV. Residues 221-234 lie on the Extracellular side of the membrane; it reads PGDGTGQNSPAYQP. A helical transmembrane segment spans residues 235–261; that stretch reads LVWFWILFGLAYFASVLTTIGNWLRAV. At 262-398 the chain is on the cytoplasmic side; the sequence is SRRTRAEMGG…GRLRDKAVPV (137 aa). A compositionally biased stretch (polar residues) spans 282-292; that stretch reads TVTARVTQRTG. The interval 282–398 is disordered; that stretch reads TVTARVTQRT…GRLRDKAVPV (117 aa). The segment covering 370 to 389 has biased composition (basic residues); the sequence is PRGRRRPNPSKKPSRPRGPG.

The protein belongs to the two pore domain potassium channel (TC 1.A.1.8) family. Homodimer; disulfide-linked. Forms heterodimers with other 2-pore domain K(+) channel subunits, such as KCNK2 and KCNK10. N-glycosylated. As to expression, expressed in brain, spinal cord and eye. Not detected in heart, skeletal muscle, liver, lungs, kidney and testis.

The protein resides in the cell membrane. It localises to the cell projection. Its subcellular location is the axon. The enzyme catalyses K(+)(in) = K(+)(out). It catalyses the reaction Rb(+)(in) = Rb(+)(out). The catalysed reaction is Cs(+)(in) = Cs(+)(out). With respect to regulation, activated by arachidonic acid and other polyunsaturated fatty acids. Not affected by volatile general anesthetics such as chloroform, diethyl ether, halothane and isoflurane. Activated at intracellular and extracellular basic pHs. K(+) channel that conducts voltage-dependent outward rectifying currents upon membrane depolarization. Voltage sensing is coupled to K(+) electrochemical gradient in an 'ion flux gating' mode where outward but not inward ion flow opens the gate. Converts to voltage-independent 'leak' conductance mode upon stimulation by various stimuli including mechanical membrane stretch, basic pH, temperature and lipids. Homo- and heterodimerizes to form functional channels with distinct regulatory and gating properties. At trigeminal A-beta afferent nerves, the heterodimer of KCNK2/TREK-1 and KCNK4/TRAAK is mostly coexpressed at nodes of Ranvier where it conducts voltage-independent mechanosensitive and thermosensitive currents, allowing rapid action potential repolarization, high speed and high frequence saltatory conduction on myelinated nerves to ensure prompt sensory responses. Permeable to other monovalent cations such as Rb(+) and Cs(+). This chain is Potassium channel subfamily K member 4, found in Mus musculus (Mouse).